Consider the following 337-residue polypeptide: Follistatin (337 aa).

The N-terminal stretch at 1-22 is a signal peptide; that stretch reads PGGVCLLLLLLCQFMEDRSAQA. In terms of domain architecture, TB spans 23–96; the sequence is GNCWLRQAKN…TCENVDCGPG (74 aa). 18 disulfides stabilise this stretch: C25–C48, C35–C81, C49–C84, C88–C99, C93–C109, C111–C143, C115–C136, C125–C157, C161–C172, C166–C182, C185–C218, C189–C211, C200–C232, C238–C249, C243–C260, C263–C295, C267–C288, and C277–C309. The 24-residue stretch at 87 to 110 folds into the Follistatin-like 1 domain; the sequence is TCENVDCGPGKKCRMNKKNKPRCV. The Kazal-like 1 domain maps to 105-159; it reads NKPRCVCAPDCSNITWKGPVCGLDGKTYRNECALLKARCKEQPELEVQYQGKCKK. N-linked (GlcNAc...) asparagine glycosylation is present at N117. Residues 160–183 enclose the Follistatin-like 2 domain; the sequence is TCRDVFCPGSSTCVVDQTNNAYCV. The Kazal-like 2 domain maps to 179 to 234; sequence NAYCVTCNRICPEPTSSEQYLCGNDGVTYPSACHLRKATCLLGRSIGLAYEGKCIK. One can recognise a Follistatin-like 3 domain in the interval 237 to 261; sequence SCEDIQCTGGKKCLWDFKVGRGRCS. In terms of domain architecture, Kazal-like 3 spans 254-311; it reads KVGRGRCSLCGELCPESKSEEPVCASDNATYASECAMKEAACSSGVLLEVKHSGSCNS. An N-linked (GlcNAc...) asparagine glycan is attached at N281. Residues 309 to 337 are disordered; that stretch reads CNSISEDTEDEEEDEDQDYSFPISSILEW. A compositionally biased stretch (acidic residues) spans 314 to 326; sequence EDTEDEEEDEDQD.

As to quaternary structure, monomer.

It is found in the secreted. Functionally, binds directly to activin and functions as an activin antagonist. Specific inhibitor of the biosynthesis and secretion of pituitary follicle stimulating hormone (FSH). This chain is Follistatin, found in Ovis aries (Sheep).